The following is a 236-amino-acid chain: LHFPL tetraspan subfamily member 3 protein (236 aa).

The next 4 helical transmembrane spans lie at 36–56, 110–130, 140–160, and 191–211; these read IGVLWAIFTICFAIVNVVCFI, FFIGLSMMLIIACIICFTLFF, ICAWMQLTSAACLVLGCMIFP, and ILAIIGILDALILSFLAFVLG.

Belongs to the LHFP family.

It is found in the membrane. The polypeptide is LHFPL tetraspan subfamily member 3 protein (Homo sapiens (Human)).